The following is a 377-amino-acid chain: Compound eye opsin BCRH1 (377 aa).

Residues 1–53 lie on the Extracellular side of the membrane; that stretch reads MANVTGPQMAFYGSGAATFGYPEGMTVADFVPDRVKHMVLDHWYNYPPVNPMW. Asn-3 carries N-linked (GlcNAc...) asparagine glycosylation. The helical transmembrane segment at 54–78 threads the bilayer; it reads HYLLGVVYLFLGVISIAGNGLVIYL. Topologically, residues 79–90 are cytoplasmic; sequence YMKSQALKTPAN. A helical transmembrane segment spans residues 91 to 115; that stretch reads MLIVNLALSDLIMLTTNFPPFCYNC. Residues 116–131 are Extracellular-facing; the sequence is FSGGRWMFSGTYCEIY. The cysteines at positions 128 and 205 are disulfide-linked. The helical transmembrane segment at 132–151 threads the bilayer; that stretch reads AALGAITGVCSIWTLCMISF. The Cytoplasmic portion of the chain corresponds to 152–170; the sequence is DRYNIICNGFNGPKLTQGK. Residues 171–194 form a helical membrane-spanning segment; it reads ATFMCGLAWVISVGWSLPPFFGWG. Residues 195-218 are Extracellular-facing; sequence SYTLEGILDSCSYDYFTRDMNTIT. The chain crosses the membrane as a helical span at residues 219 to 246; the sequence is YNICIFIFDFFLPASVIVFSYVFIVKAI. Residues 247–281 lie on the Cytoplasmic side of the membrane; it reads FAHEAAMRAQAKKMNVTNLRSNEAETQRAEIRIAK. A helical membrane pass occupies residues 282-305; the sequence is TALVNVSLWFICWTPYAAITIQGL. At 306–313 the chain is on the extracellular side; the sequence is LGNAEGIT. The chain crosses the membrane as a helical span at residues 314 to 338; it reads PLLTTLPALLAKSCSCYNPFVYAIS. Lys-325 is modified (N6-(retinylidene)lysine). Topologically, residues 339–377 are cytoplasmic; it reads HPKFRLAITQHLPWFCVHEKDPNDVEENQSSNTQTQEKS.

Belongs to the G-protein coupled receptor 1 family. Opsin subfamily. Post-translationally, phosphorylated on some or all of the serine and threonine residues present in the C-terminal region. In terms of tissue distribution, expressed in all of the seven retinular cells (R1-R7) forming the main rhabdom in each ommatidium.

The protein resides in the membrane. Functionally, visual pigments are the light-absorbing molecules that mediate vision. They consist of an apoprotein, opsin, covalently linked to cis-retinal. This opsin produces visual pigments with maximal absorption in the blue-green region of the spectrum. In Hemigrapsus sanguineus (Asian shore crab), this protein is Compound eye opsin BCRH1.